We begin with the raw amino-acid sequence, 114 residues long: Ribonuclease U2 (114 aa).

3 disulfides stabilise this stretch: Cys1/Cys54, Cys9/Cys113, and Cys55/Cys96. Asp29, Val30, Ala31, Asn32, Asp37, and Tyr39 together coordinate Ca(2+). 39–49 is a substrate binding site; it reads YPHQYYDEASE. His41 is a catalytic residue. The Proton acceptor role is filled by Glu62. A substrate-binding site is contributed by Arg85. Residue His101 is the Proton donor of the active site. 108–110 is a binding site for substrate; sequence DGF.

It belongs to the ribonuclease U2 family.

It catalyses the reaction [RNA] containing adenosine + H2O = an [RNA fragment]-3'-adenosine-3'-phosphate + a 5'-hydroxy-ribonucleotide-3'-[RNA fragment].. The enzyme catalyses [RNA] containing guanosine + H2O = an [RNA fragment]-3'-guanosine-3'-phosphate + a 5'-hydroxy-ribonucleotide-3'-[RNA fragment].. This chain is Ribonuclease U2 (RNU2), found in Ustilago sphaerogena (Smut fungus).